Reading from the N-terminus, the 371-residue chain is GDP-mannose 3,5-epimerase 2 (371 aa).

NAD(+) is bound by residues 29–55 (GAGG…SDWK), Asp53, and Asp73. Substrate-binding positions include Gly98 and 138–140 (SAC). NAD(+)-binding residues include Tyr168 and Lys172. Tyr168 (proton acceptor) is an active-site residue. Residues Asn197, 210–212 (EKA), Lys219, 235–237 (QTR), Arg300, and Ser350 contribute to the substrate site.

Belongs to the NAD(P)-dependent epimerase/dehydratase family. NAD(+) is required as a cofactor.

It catalyses the reaction GDP-alpha-D-mannose = GDP-beta-L-gulose. It carries out the reaction GDP-beta-L-gulose = GDP-beta-L-galactose. The protein operates within cofactor biosynthesis; L-ascorbate biosynthesis via GDP-alpha-D-mannose pathway; L-ascorbate from GDP-alpha-D-mannose: step 1/5. Its function is as follows. Catalyzes a reversible epimerization of GDP-D-mannose that precedes the committed step in the biosynthesis of vitamin C (L-ascorbate), resulting in the hydrolysis of the highly energetic glycosyl-pyrophosphoryl linkage. Able to catalyze 2 distinct epimerization reactions and can release both GDP-L-galactose and GDP-L-gulose from GDP-mannose. The protein is GDP-mannose 3,5-epimerase 2 (GME-2) of Oryza sativa subsp. japonica (Rice).